The chain runs to 29 residues: Ranatuerin-2SEa (29 aa).

A disulfide bridge links C23 with C29.

Expressed by the skin glands.

Its subcellular location is the secreted. Mast cell degranulating peptide. Causes histamine release from rat peritoneal mast cells in vitro. Has antibacterial activity against the Gram-negative bacterium E.coli K12 and Gram-positive bacterium M.luteus NCT C2665. The sequence is that of Ranatuerin-2SEa from Lithobates sevosus (Dusky gopher frog).